We begin with the raw amino-acid sequence, 404 residues long: Dihydroorotase (404 aa).

The Zn(2+) site is built by His57 and His59. Substrate-binding positions include 59 to 61 (HLR) and Asn91. The Zn(2+) site is built by Lys135, His164, His204, and Asp272. Lys135 carries the N6-carboxylysine modification. Asp272 is a catalytic residue. Substrate is bound by residues His276 and 286–287 (AG).

Belongs to the metallo-dependent hydrolases superfamily. DHOase family. Class I DHOase subfamily. Requires Zn(2+) as cofactor.

The catalysed reaction is (S)-dihydroorotate + H2O = N-carbamoyl-L-aspartate + H(+). It functions in the pathway pyrimidine metabolism; UMP biosynthesis via de novo pathway; (S)-dihydroorotate from bicarbonate: step 3/3. Functionally, catalyzes the reversible cyclization of carbamoyl aspartate to dihydroorotate. This is Dihydroorotase from Pyrococcus abyssi (strain GE5 / Orsay).